Reading from the N-terminus, the 244-residue chain is tRNA (guanine-N(1)-)-methyltransferase (244 aa).

S-adenosyl-L-methionine is bound by residues Gly-114 and 134-139 (IGDYVL). The tract at residues 220-244 (RRPDLLEKAGASPGKSGSNFGKHDA) is disordered.

Belongs to the RNA methyltransferase TrmD family. In terms of assembly, homodimer.

Its subcellular location is the cytoplasm. It carries out the reaction guanosine(37) in tRNA + S-adenosyl-L-methionine = N(1)-methylguanosine(37) in tRNA + S-adenosyl-L-homocysteine + H(+). In terms of biological role, specifically methylates guanosine-37 in various tRNAs. This chain is tRNA (guanine-N(1)-)-methyltransferase, found in Rhizobium johnstonii (strain DSM 114642 / LMG 32736 / 3841) (Rhizobium leguminosarum bv. viciae).